Reading from the N-terminus, the 252-residue chain is Imidazole glycerol phosphate synthase subunit HisF (252 aa).

Residues aspartate 11 and aspartate 130 contribute to the active site.

It belongs to the HisA/HisF family. Heterodimer of HisH and HisF.

The protein localises to the cytoplasm. The enzyme catalyses 5-[(5-phospho-1-deoxy-D-ribulos-1-ylimino)methylamino]-1-(5-phospho-beta-D-ribosyl)imidazole-4-carboxamide + L-glutamine = D-erythro-1-(imidazol-4-yl)glycerol 3-phosphate + 5-amino-1-(5-phospho-beta-D-ribosyl)imidazole-4-carboxamide + L-glutamate + H(+). The protein operates within amino-acid biosynthesis; L-histidine biosynthesis; L-histidine from 5-phospho-alpha-D-ribose 1-diphosphate: step 5/9. Functionally, IGPS catalyzes the conversion of PRFAR and glutamine to IGP, AICAR and glutamate. The HisF subunit catalyzes the cyclization activity that produces IGP and AICAR from PRFAR using the ammonia provided by the HisH subunit. The chain is Imidazole glycerol phosphate synthase subunit HisF from Bacillus cereus (strain ATCC 10987 / NRS 248).